A 2179-amino-acid chain; its full sequence is FRAS1-related extracellular matrix protein 1 (2179 aa).

The N-terminal stretch at Met1 to Ala21 is a signal peptide. The short motif at Arg199–Asp201 is the Cell attachment site element. CSPG repeat units follow at residues Lys296–Tyr390, Ala413–Phe500, and Pro521–Trp615. The N-linked (GlcNAc...) asparagine glycan is linked to Asn335. 2 N-linked (GlcNAc...) asparagine glycosylation sites follow: Asn560 and Asn622. 3 CSPG repeats span residues Lys642–Ser754, Gln776–Thr867, and Glu887–Ser982. Residue Asn1014 is glycosylated (N-linked (GlcNAc...) asparagine). CSPG repeat units lie at residues Pro1024 to Thr1126, Glu1147 to Ser1254, Lys1275 to Trp1372, Gly1393 to Ser1485, Leu1506 to Thr1596, and Pro1628 to Met1724. A glycan (N-linked (GlcNAc...) asparagine) is linked at Asn1566. One can recognise a Calx-beta domain in the interval Ala1731 to Asn1830. Positions Arg1907 to Asp1909 match the Cell attachment site motif. Residues His2060–Val2174 enclose the C-type lectin domain. Cys2151 and Cys2165 are joined by a disulfide.

This sequence belongs to the FRAS1 family. As to quaternary structure, interacts with FREM2.

It is found in the secreted. The protein resides in the extracellular space. Its subcellular location is the extracellular matrix. The protein localises to the basement membrane. Functionally, extracellular matrix protein that plays a role in epidermal differentiation and is required for epidermal adhesion during embryonic development. This is FRAS1-related extracellular matrix protein 1 from Homo sapiens (Human).